Here is a 514-residue protein sequence, read N- to C-terminus: Peptide chain release factor 3 (514 aa).

The tr-type G domain maps to 8-268; the sequence is KKRRTFAIIS…TFLKFAPEPH (261 aa). Residues 17–24, 85–89, and 139–142 each bind GTP; these read SHPDAGKT, DTPGH, and NKLD.

The protein belongs to the TRAFAC class translation factor GTPase superfamily. Classic translation factor GTPase family. PrfC subfamily.

The protein resides in the cytoplasm. In terms of biological role, increases the formation of ribosomal termination complexes and stimulates activities of RF-1 and RF-2. It binds guanine nucleotides and has strong preference for UGA stop codons. It may interact directly with the ribosome. The stimulation of RF-1 and RF-2 is significantly reduced by GTP and GDP, but not by GMP. This Streptococcus thermophilus (strain CNRZ 1066) protein is Peptide chain release factor 3.